We begin with the raw amino-acid sequence, 337 residues long: 4-hydroxy-3-methylbut-2-enyl diphosphate reductase (337 aa).

Residue C25 participates in [4Fe-4S] cluster binding. (2E)-4-hydroxy-3-methylbut-2-enyl diphosphate contacts are provided by H54 and H87. Dimethylallyl diphosphate-binding residues include H54 and H87. H54 and H87 together coordinate isopentenyl diphosphate. C109 contributes to the [4Fe-4S] cluster binding site. H137 is a binding site for (2E)-4-hydroxy-3-methylbut-2-enyl diphosphate. A dimethylallyl diphosphate-binding site is contributed by H137. H137 lines the isopentenyl diphosphate pocket. The Proton donor role is filled by E139. T177 contacts (2E)-4-hydroxy-3-methylbut-2-enyl diphosphate. C207 lines the [4Fe-4S] cluster pocket. Residues S235, S236, N237, and S280 each contribute to the (2E)-4-hydroxy-3-methylbut-2-enyl diphosphate site. Dimethylallyl diphosphate is bound by residues S235, S236, N237, and S280. Positions 235, 236, 237, and 280 each coordinate isopentenyl diphosphate.

Belongs to the IspH family. It depends on [4Fe-4S] cluster as a cofactor.

The catalysed reaction is isopentenyl diphosphate + 2 oxidized [2Fe-2S]-[ferredoxin] + H2O = (2E)-4-hydroxy-3-methylbut-2-enyl diphosphate + 2 reduced [2Fe-2S]-[ferredoxin] + 2 H(+). It carries out the reaction dimethylallyl diphosphate + 2 oxidized [2Fe-2S]-[ferredoxin] + H2O = (2E)-4-hydroxy-3-methylbut-2-enyl diphosphate + 2 reduced [2Fe-2S]-[ferredoxin] + 2 H(+). It participates in isoprenoid biosynthesis; dimethylallyl diphosphate biosynthesis; dimethylallyl diphosphate from (2E)-4-hydroxy-3-methylbutenyl diphosphate: step 1/1. Its pathway is isoprenoid biosynthesis; isopentenyl diphosphate biosynthesis via DXP pathway; isopentenyl diphosphate from 1-deoxy-D-xylulose 5-phosphate: step 6/6. Catalyzes the conversion of 1-hydroxy-2-methyl-2-(E)-butenyl 4-diphosphate (HMBPP) into a mixture of isopentenyl diphosphate (IPP) and dimethylallyl diphosphate (DMAPP). Acts in the terminal step of the DOXP/MEP pathway for isoprenoid precursor biosynthesis. This chain is 4-hydroxy-3-methylbut-2-enyl diphosphate reductase, found in Leifsonia xyli subsp. xyli (strain CTCB07).